Reading from the N-terminus, the 110-residue chain is Large ribosomal subunit protein uL22 (110 aa).

Belongs to the universal ribosomal protein uL22 family. As to quaternary structure, part of the 50S ribosomal subunit.

Its function is as follows. This protein binds specifically to 23S rRNA; its binding is stimulated by other ribosomal proteins, e.g. L4, L17, and L20. It is important during the early stages of 50S assembly. It makes multiple contacts with different domains of the 23S rRNA in the assembled 50S subunit and ribosome. The globular domain of the protein is located near the polypeptide exit tunnel on the outside of the subunit, while an extended beta-hairpin is found that lines the wall of the exit tunnel in the center of the 70S ribosome. The polypeptide is Large ribosomal subunit protein uL22 (Yersinia pseudotuberculosis serotype O:1b (strain IP 31758)).